Consider the following 289-residue polypeptide: Undecaprenyl-diphosphatase (289 aa).

Helical transmembrane passes span 23–43 (LFLG…TAHL), 56–76 (GVAV…AYFW), 104–124 (SAIV…KLFW), 135–155 (IPAI…AENV), 165–185 (LSFW…IPGV), 210–230 (FLLG…QAFG), 235–255 (VDVF…WIAI), and 269–289 (IFIT…YLAF).

This sequence belongs to the UppP family.

Its subcellular location is the cell inner membrane. The enzyme catalyses di-trans,octa-cis-undecaprenyl diphosphate + H2O = di-trans,octa-cis-undecaprenyl phosphate + phosphate + H(+). Functionally, catalyzes the dephosphorylation of undecaprenyl diphosphate (UPP). Confers resistance to bacitracin. The protein is Undecaprenyl-diphosphatase of Prochlorococcus marinus (strain SARG / CCMP1375 / SS120).